The primary structure comprises 272 residues: Hydroxyethylthiazole kinase (272 aa).

Methionine 44 is a binding site for substrate. Residues lysine 119 and threonine 172 each contribute to the ATP site. Glycine 199 contacts substrate.

It belongs to the Thz kinase family. The cofactor is Mg(2+).

The enzyme catalyses 5-(2-hydroxyethyl)-4-methylthiazole + ATP = 4-methyl-5-(2-phosphooxyethyl)-thiazole + ADP + H(+). The protein operates within cofactor biosynthesis; thiamine diphosphate biosynthesis; 4-methyl-5-(2-phosphoethyl)-thiazole from 5-(2-hydroxyethyl)-4-methylthiazole: step 1/1. Functionally, catalyzes the phosphorylation of the hydroxyl group of 4-methyl-5-beta-hydroxyethylthiazole (THZ). The protein is Hydroxyethylthiazole kinase of Enterococcus faecalis (strain ATCC 700802 / V583).